The chain runs to 173 residues: Rubredoxin-2 (173 aa).

Rubredoxin-like domains lie at 2–53 (ASYK…FMLI) and 119–170 (YLKW…YVLY). Residues Cys-6, Cys-9, Cys-39, Cys-42, Cys-124, Cys-127, Cys-157, and Cys-160 each contribute to the Fe cation site.

It belongs to the rubredoxin family. Requires Fe(3+) as cofactor.

The protein resides in the cytoplasm. The protein operates within hydrocarbon metabolism; alkane degradation. Functionally, involved in the hydrocarbon hydroxylating system, which transfers electrons from NADH to rubredoxin reductase and then through rubredoxin to alkane 1 monooxygenase. The polypeptide is Rubredoxin-2 (alkG) (Ectopseudomonas oleovorans (Pseudomonas oleovorans)).